A 134-amino-acid polypeptide reads, in one-letter code: Thionin-2.1 (134 aa).

Residues 1 to 24 (MKGRILILSLLIMSLVMAQVQVEA) form the signal peptide. 3 disulfides stabilise this stretch: C27–C61, C28–C55, and C40–C49. A propeptide spans 68–134 (AILENSADAT…VVPPGPPKLL (67 aa)) (acidic domain).

Belongs to the plant thionin (TC 1.C.44) family. In terms of tissue distribution, detected in rosette leaves and at a very high level in flowers and in siliques.

It localises to the secreted. Seems to function as a defense factor. Thionins are small plant proteins which are toxic to animal cells. They seem to exert their toxic effect at the level of the cell membrane. Their precise function is not known. The chain is Thionin-2.1 (THI2.1) from Arabidopsis thaliana (Mouse-ear cress).